The sequence spans 35 residues: Dolichyl-diphosphooligosaccharide--protein glycosyltransferase subunit 4C (35 aa).

Topologically, residues 1 to 8 (MFDDQDLG) are lumenal. A helical transmembrane segment spans residues 9-29 (FFANFLGIFIFILVIAYHFVM). Topologically, residues 30–35 (ADPKFE) are cytoplasmic.

This sequence belongs to the OST4 family. In terms of assembly, component of the oligosaccharyltransferase (OST) complex.

It localises to the endoplasmic reticulum membrane. Subunit of the oligosaccharyl transferase (OST) complex that catalyzes the initial transfer of a defined glycan (Glc(3)Man(9)GlcNAc(2) in eukaryotes) from the lipid carrier dolichol-pyrophosphate to an asparagine residue within an Asn-X-Ser/Thr consensus motif in nascent polypeptide chains, the first step in protein N-glycosylation. N-glycosylation occurs cotranslationally and the complex associates with the Sec61 complex at the channel-forming translocon complex that mediates protein translocation across the endoplasmic reticulum (ER). All subunits are required for a maximal enzyme activity. The polypeptide is Dolichyl-diphosphooligosaccharide--protein glycosyltransferase subunit 4C (OST4C) (Arabidopsis thaliana (Mouse-ear cress)).